The chain runs to 265 residues: Imidazole glycerol phosphate synthase subunit HisF (265 aa).

Catalysis depends on residues Asp-17 and Asp-136.

Belongs to the HisA/HisF family. As to quaternary structure, heterodimer of HisH and HisF.

It localises to the cytoplasm. The enzyme catalyses 5-[(5-phospho-1-deoxy-D-ribulos-1-ylimino)methylamino]-1-(5-phospho-beta-D-ribosyl)imidazole-4-carboxamide + L-glutamine = D-erythro-1-(imidazol-4-yl)glycerol 3-phosphate + 5-amino-1-(5-phospho-beta-D-ribosyl)imidazole-4-carboxamide + L-glutamate + H(+). The protein operates within amino-acid biosynthesis; L-histidine biosynthesis; L-histidine from 5-phospho-alpha-D-ribose 1-diphosphate: step 5/9. IGPS catalyzes the conversion of PRFAR and glutamine to IGP, AICAR and glutamate. The HisF subunit catalyzes the cyclization activity that produces IGP and AICAR from PRFAR using the ammonia provided by the HisH subunit. This Mycobacterium avium (strain 104) protein is Imidazole glycerol phosphate synthase subunit HisF.